Reading from the N-terminus, the 181-residue chain is 6,7-dimethyl-8-ribityllumazine synthase (181 aa).

5-amino-6-(D-ribitylamino)uracil is bound by residues phenylalanine 24, 62–64 (SFE), and 86–88 (AII). 91-92 (QT) lines the (2S)-2-hydroxy-3-oxobutyl phosphate pocket. The Proton donor role is filled by histidine 94. Phenylalanine 119 is a binding site for 5-amino-6-(D-ribitylamino)uracil. Residue arginine 133 participates in (2S)-2-hydroxy-3-oxobutyl phosphate binding.

It belongs to the DMRL synthase family.

It carries out the reaction (2S)-2-hydroxy-3-oxobutyl phosphate + 5-amino-6-(D-ribitylamino)uracil = 6,7-dimethyl-8-(1-D-ribityl)lumazine + phosphate + 2 H2O + H(+). It participates in cofactor biosynthesis; riboflavin biosynthesis; riboflavin from 2-hydroxy-3-oxobutyl phosphate and 5-amino-6-(D-ribitylamino)uracil: step 1/2. Functionally, catalyzes the formation of 6,7-dimethyl-8-ribityllumazine by condensation of 5-amino-6-(D-ribitylamino)uracil with 3,4-dihydroxy-2-butanone 4-phosphate. This is the penultimate step in the biosynthesis of riboflavin. This is 6,7-dimethyl-8-ribityllumazine synthase from Microcystis aeruginosa (strain NIES-843 / IAM M-2473).